A 1325-amino-acid polypeptide reads, in one-letter code: Sperm-specific sodium:proton exchanger (1325 aa).

The first 29 residues, 1–29 (MKKRVVKLRELVPAVAALAVAVLIQSATG), serve as a signal peptide directing secretion. A disordered region spans residues 28-68 (TGSSGGSGHTPTTQATHADDHDLTTHNGTEEHDDGHDDGHD). Residues 30-76 (SSGGSGHTPTTQATHADDHDLTTHNGTEEHDDGHDDGHDDLHAHAPK) lie on the Extracellular side of the membrane. Residues 44-68 (HADDHDLTTHNGTEEHDDGHDDGHD) are compositionally biased toward basic and acidic residues. Residue histidine 73 coordinates a 1,2-diacylglycero-3-phosphate. Residues 77-96 (VIVFISGSCLFGAISRSLFK) form a helical membrane-spanning segment. At 97–101 (KLPIP) the chain is on the cytoplasmic side. Residues 102-119 (YTVVLLILGAILGVVASN) traverse the membrane as a helical segment. At 120 to 135 (VPLVEEHTRDVAHMDP) the chain is on the extracellular side. A helical transmembrane segment spans residues 136–152 (HVLLQIFLPVLIFESAF). Topologically, residues 153–162 (AMDVHTFMRS) are cytoplasmic. Residues 163-188 (FSQVCILALFGLVVASVLTAVLAMNL) form a helical membrane-spanning segment. Positions 163–250 (FSQVCILALF…AIVIFNVFMK (88 aa)) are transport core domain. The Extracellular segment spans residues 189–194 (FNYNWN). The chain crosses the membrane as a helical span at residues 195–220 (FSEAMMFGAIMSATDPVAVVALLKDL). Over 221-223 (GAS) the chain is Cytoplasmic. A helical membrane pass occupies residues 224–249 (KQLGTIIEGESLLNDGCAIVIFNVFM). Positions 237 to 238 (ND) match the Essential for sodium:proton exchange motif. Residues 250-260 (KMVFFPQLTST) lie on the Extracellular side of the membrane. The helical transmembrane segment at 261 to 292 (VGQNVLYFLQVAVAGPLWGYAVAKVTVFFLSH) threads the bilayer. Residues 293 to 296 (IFND) are Cytoplasmic-facing. A helical transmembrane segment spans residues 297–319 (ALVEITITLAATYLTYYIGDIWL). Topologically, residues 320-322 (EVS) are extracellular. A helical membrane pass occupies residues 323-336 (GVLAVVVLGLIVNA). At 337-343 (EKTSISP) the chain is on the cytoplasmic side. Residues 344–377 (EVEVFLHRFWEMLAYLANTLIFMMVGVVVTQKAL) form a helical membrane-spanning segment. The Extracellular portion of the chain corresponds to 378–382 (VAVDK). The chain crosses the membrane as a helical span at residues 383–412 (MDWFYLIILYLAITIIRGMVISLFSPILSR). Residues 383-481 (MDWFYLIILY…TTIQTLLRIL (99 aa)) form a transport core domain region. The Cytoplasmic segment spans residues 413–418 (IGYGLT). The chain crosses the membrane as a helical span at residues 419–446 (WRNAVIMTWGGLRGAVGLALALVVENLA). At 447–450 (GNDV) the chain is on the extracellular side. A helical transmembrane segment spans residues 451–481 (IGSKFLFHTAGIVVLTLVINATTIQTLLRIL). Over 482-677 (GMSDISIPKR…GKLMYKICHH (196 aa)) the chain is Cytoplasmic. The interacts with the S4 segment of voltage sensor domain stretch occupies residues 575 to 620 (FADMMEEARLRMLKAEKISYWKQFEHGMLAREALRLLVQHAEVAAD). Residues 605-620 (REALRLLVQHAEVAAD) form an interacts with the transport core domain; can lock the transporter in the inward conformation region. A helical membrane pass occupies residues 678-708 (MAFEVTINIAIVLNIVPIIMEFVVQDKMASV). Topologically, residues 709–724 (STMAAPGSTVSSEPSS) are extracellular. A helical transmembrane segment spans residues 725–752 (LQKIEDALRISNYVFFVIYAIEAIVKIL). The Cytoplasmic segment spans residues 753 to 760 (GLGRHYIV). The helical transmembrane segment at 761–784 (SHWNKFDAFILVVALVDIIIAETL) threads the bilayer. The Extracellular segment spans residues 785–795 (LKGSITINLSS). The chain crosses the membrane as a helical span at residues 796–822 (IKVVKLFRLLRGLRMLRLTKALIPKLI). The interval 796 to 857 (IKVVKLFRLL…EEVGKIIDRM (62 aa)) is S4 segment of voltage sensor domain. The Cytoplasmic segment spans residues 823–1325 (LVVNGKINNQ…EEGAAPRVNV (503 aa)). The segment at 860 to 919 (NKKILRELKHISETGRLQVVKELGLLQREHPGIAVSVKTRQAIRTILNHSRETIHELQGA) is interacts with the S4 segment of voltage sensor domain. The tract at residues 968 to 1068 (KLIDFIKARA…CETTVQVYFI (101 aa)) is cNMP-binding domain. Glycine 1043 is a binding site for 3',5'-cyclic AMP. 3',5'-cyclic GMP-binding residues include glycine 1043, glutamate 1044, and methionine 1045. 3',5'-cyclic AMP-binding residues include methionine 1045, glycine 1046, arginine 1053, and asparagine 1054. 3',5'-cyclic GMP contacts are provided by arginine 1053 and asparagine 1054. The tract at residues 1237–1325 (MLSRKSSGAA…EEGAAPRVNV (89 aa)) is disordered. A compositionally biased stretch (low complexity) spans 1266–1280 (VSPSVPTKTTPKPKS).

It belongs to the monovalent cation:proton antiporter 1 (CPA1) transporter (TC 2.A.36) family. As to quaternary structure, homodimer; the dimerization is stabilized in the presence of phosphatidic acids.

The protein resides in the cell projection. The protein localises to the cilium. It is found in the flagellum membrane. The catalysed reaction is Na(+)(in) + H(+)(out) = Na(+)(out) + H(+)(in). With respect to regulation, gated by voltage and stimulated by cyclic nucleotides which shift the activation voltage closer to resting membrane potential. Not inhibited by common sodium:proton exchanger inhibitors such as amiloride. Its function is as follows. Electroneutral sodium:proton antiporter that regulates intracellular pH of sperm along with capacitation and fertility. Activated in response to egg-derived chemoattractants, couples membrane voltage to sodium:proton exchange and transduces membrane hyperpolarization to cytoplasmic alkalization to cAMP signaling and ultimately to sperm motility. The sequence is that of Sperm-specific sodium:proton exchanger from Strongylocentrotus purpuratus (Purple sea urchin).